Reading from the N-terminus, the 257-residue chain is MSILSLVGLGISKKFITENAIDTLNNSDIIIFDKYTSRSCDINVDVLRRLVKGGKTLIEADRSLLENNSKIIMDYLDKNYNVSIASIGDVLIATTHVSLLIEAKQRGHNVKVIPGISVHCYLISKSLLSSYKFGKSVTVTFPYNDFIDPTPYNVIKDNKERGLHTILYLDLKSEKAMTANEALQILLRLEDKHRKNVLSKSDIVIVGARLGCDDEKIVALTVEEATLYDFGNTPHIIIIPGNLHYMEADAIKWMLMS.

S-adenosyl-L-methionine-binding positions include Ile11, Asp89, Ile92, 117-118 (SV), Leu169, Leu210, and His235.

It belongs to the diphthine synthase family. Homodimer.

It catalyses the reaction 2-[(3S)-amino-3-carboxypropyl]-L-histidyl-[translation elongation factor 2] + 3 S-adenosyl-L-methionine = diphthine-[translation elongation factor 2] + 3 S-adenosyl-L-homocysteine + 3 H(+). It functions in the pathway protein modification; peptidyl-diphthamide biosynthesis. S-adenosyl-L-methionine-dependent methyltransferase that catalyzes the trimethylation of the amino group of the modified target histidine residue in translation elongation factor 2 (EF-2), to form an intermediate called diphthine. The three successive methylation reactions represent the second step of diphthamide biosynthesis. This Saccharolobus islandicus (strain L.S.2.15 / Lassen #1) (Sulfolobus islandicus) protein is Diphthine synthase.